Reading from the N-terminus, the 420-residue chain is Nucleobindin-2 (420 aa).

The first 24 residues, 1 to 24, serve as a signal peptide directing secretion; the sequence is MRWRIIQVQYCFLLVPCMLTALEA. Residues 171–223 mediate DNA binding; the sequence is RTRHEEFKKYEMMKEHERREYLKTLSEEKRKEEESKFEEMKRKHEDHPKVNHP. The segment at 193-225 is disordered; the sequence is KTLSEEKRKEEESKFEEMKRKHEDHPKVNHPGS. The binds to necdin stretch occupies residues 213 to 420; sequence KHEDHPKVNH…AGELKFEPHT (208 aa). EF-hand domains are found at residues 241–276 and 293–328; these read PNDF…ELEK and ERLR…KEFL. D254, N256, D258, E265, D306, N308, D310, and E317 together coordinate Ca(2+). Residues 304–334 carry the GBA motif; it reads EIDNNKDRLVTLEEFLRATEKKEFLEPDSWE. At S332 the chain carries Phosphoserine. A compositionally biased stretch (basic and acidic residues) spans 365–389; that stretch reads AEELQKQKEDLQRQHDHLEAQKQEY. Positions 365-420 are disordered; the sequence is AEELQKQKEDLQRQHDHLEAQKQEYHQAVQHLEQKKLQQGIAPSGPAGELKFEPHT.

This sequence belongs to the nucleobindin family. In terms of assembly, interacts (via GBA motif) with guanine nucleotide-binding protein G(i) alpha subunit GNAI3. Preferentially interacts with inactive rather than active GNAI3. Interaction with GNAI3 is inhibited when NUCB2 binds calcium, probably due to a conformational change which renders the GBA motif inaccessible. Binds to the postmitotic growth suppressor NDN; coexpression abolishes NUCB2 secretion. Interacts with MC4R. In terms of tissue distribution, found in liver, heart, thymus, muscle, intestine, kidney, lung, spleen and throughout the brain, in cerebral cortex, hippocampus, hypothalamus and medulla oblongata. Nucb2 and necdin levels were higher in postmitotic neurons.

It is found in the cytoplasm. Its subcellular location is the perikaryon. It localises to the endoplasmic reticulum. The protein resides in the golgi apparatus. The protein localises to the nucleus envelope. It is found in the membrane. Its subcellular location is the secreted. Calcium-binding protein which may have a role in calcium homeostasis. Acts as a non-receptor guanine nucleotide exchange factor which binds to and activates guanine nucleotide-binding protein (G-protein) alpha subunit GNAI3. In terms of biological role, anorexigenic peptide, seems to play an important role in hypothalamic pathways regulating food intake and energy homeostasis, acting in a leptin-independent manner. May also exert hypertensive roles and modulate blood pressure through directly acting on peripheral arterial resistance. In intestinal epithelial cells, plays a role in the inhibition of hepatic glucose production via MC4R receptor leading to increased cyclic adenosine monophosphate (cAMP) levels and glucagon-like peptide 1 (GLP-1) secretion. The chain is Nucleobindin-2 (Nucb2) from Mus musculus (Mouse).